The following is a 284-amino-acid chain: Nucleotide-binding protein PputGB1_0956 (284 aa).

ATP is bound at residue 8 to 15 (GRSGSGKS). A GTP-binding site is contributed by 60 to 63 (DARN).

It belongs to the RapZ-like family.

Displays ATPase and GTPase activities. This is Nucleotide-binding protein PputGB1_0956 from Pseudomonas putida (strain GB-1).